The primary structure comprises 170 residues: Peptide deformylase (170 aa).

Fe cation-binding residues include cysteine 91 and histidine 133. Glutamate 134 is a catalytic residue. Histidine 137 contributes to the Fe cation binding site.

Belongs to the polypeptide deformylase family. Requires Fe(2+) as cofactor.

It catalyses the reaction N-terminal N-formyl-L-methionyl-[peptide] + H2O = N-terminal L-methionyl-[peptide] + formate. Its function is as follows. Removes the formyl group from the N-terminal Met of newly synthesized proteins. Requires at least a dipeptide for an efficient rate of reaction. N-terminal L-methionine is a prerequisite for activity but the enzyme has broad specificity at other positions. The chain is Peptide deformylase from Pectobacterium carotovorum subsp. carotovorum (strain PC1).